The following is a 778-amino-acid chain: GRIP and coiled-coil domain-containing protein 1 (778 aa).

Residues 13 to 61 adopt a coiled-coil conformation; sequence SKKDLLETIETQKKQLLQYQARLKDVVRAYKSLLKEKEALEASIKVLSV. Disordered stretches follow at residues 70–157, 186–208, and 617–638; these read SGVQ…MDKR, YLADKKKMKQDLEDANKKAEEER, and GRRSPVGGVGGGGLGDPADTAS. A compositionally biased stretch (basic and acidic residues) spans 83 to 93; that stretch reads VDDRCSTHSED. Low complexity-rich tracts occupy residues 94–109 and 133–152; these read STGTATSLDTAASLTS and ASGSESGVSSSSGDGPSAGS. A coiled-coil region spans residues 152–702; sequence SEMDKRVHQL…EEGERHREEV (551 aa). One can recognise a GRIP domain in the interval 716-766; the sequence is QSREGANLEYLKNIIYRFLTLPDSLGRQQTLTAILTILHFSPEEKQVLMRL.

The protein resides in the cytoplasm. It localises to the golgi apparatus membrane. Functionally, probably involved in maintaining Golgi structure. In Mus musculus (Mouse), this protein is GRIP and coiled-coil domain-containing protein 1 (Gcc1).